The primary structure comprises 231 residues: Acyl-protein thioesterase 2 (231 aa).

Residue cysteine 2 is the site of S-palmitoyl cysteine attachment. Serine 82 is subject to Phosphoserine. Catalysis depends on charge relay system residues serine 122, aspartate 176, and histidine 210.

The protein belongs to the AB hydrolase superfamily. AB hydrolase 2 family. As to expression, ubiquitous; detected at low levels.

The protein localises to the cytoplasm. It catalyses the reaction S-hexadecanoyl-L-cysteinyl-[protein] + H2O = L-cysteinyl-[protein] + hexadecanoate + H(+). The enzyme catalyses prostaglandin E2 1-glyceryl ester + H2O = prostaglandin E2 + glycerol + H(+). The catalysed reaction is 1-hexadecanoyl-sn-glycero-3-phosphocholine + H2O = sn-glycerol 3-phosphocholine + hexadecanoate + H(+). It carries out the reaction 1-octadecanoyl-sn-glycero-3-phosphocholine + H2O = octadecanoate + sn-glycerol 3-phosphocholine + H(+). It catalyses the reaction 1-hexadecanoyl-sn-glycero-3-phosphate + H2O = sn-glycerol 3-phosphate + hexadecanoate + H(+). The enzyme catalyses 1-hexadecanoyl-sn-glycero-3-phospho-L-serine + H2O = sn-glycero-3-phospho-L-serine + hexadecanoate + H(+). In terms of biological role, acts as an acyl-protein thioesterase hydrolyzing fatty acids from S-acylated cysteine residues in proteins such as trimeric G alpha proteins, GSDMD, GAP43, ZDHHC6 or HRAS. Deacylates GAP43. Mediates depalmitoylation of ZDHHC6. Has lysophospholipase activity. Hydrolyzes prostaglandin glycerol esters (PG-Gs). Hydrolyzes PG-Gs in the following order prostaglandin D2-glycerol ester (PGD2-G) &gt; prostaglandin E2 glycerol ester (PGE2-G) &gt; prostaglandin F2-alpha-glycerol ester (PGF2-alpha-G). Hydrolyzes 1-arachidonoylglycerol but not 2-arachidonoylglycerol or arachidonoylethanolamide. This chain is Acyl-protein thioesterase 2 (Lypla2), found in Mus musculus (Mouse).